The sequence spans 412 residues: Acyl-[acyl-carrier-protein] hydrolase FATB2, chloroplastic (412 aa).

Composition is skewed to low complexity over residues 1-13 and 56-66; these read TAAS…VPSA and GSSVGLKSGGL. Residues 1 to 46 constitute a chloroplast transit peptide; the sequence is TAASSAFFPVPSADTSSRPGKLGNGPSSFSPLKPKSIPNGGLQVKA. A disordered region spans residues 1–78; that stretch reads TAASSAFFPV…HDDAPSAPPP (78 aa). Catalysis depends on residues Asn311, His313, and Cys348.

This sequence belongs to the acyl-ACP thioesterase family.

It localises to the plastid. The protein localises to the chloroplast. It carries out the reaction tetradecanoyl-[ACP] + H2O = tetradecanoate + holo-[ACP] + H(+). The enzyme catalyses hexadecanoyl-[ACP] + H2O = hexadecanoate + holo-[ACP] + H(+). Functionally, plays an essential role in chain termination during de novo fatty acid synthesis. Possesses thioesterase activity for medium chain acyl-ACPs. Substrate preference is 14:0 &gt; 16:0 &gt; 16:1. The polypeptide is Acyl-[acyl-carrier-protein] hydrolase FATB2, chloroplastic (Cuphea viscosissima (Blue waxweed)).